Consider the following 122-residue polypeptide: Basic phospholipase A2 PLA-B (122 aa).

Cystine bridges form between Cys26-Cys115, Cys28-Cys44, Cys43-Cys95, Cys49-Cys122, Cys50-Cys88, Cys57-Cys81, and Cys75-Cys86. Ca(2+) is bound by residues Tyr27, Gly29, and Gly31. Residue His47 is part of the active site. Residue Asp48 participates in Ca(2+) binding. Asp89 is a catalytic residue.

This sequence belongs to the phospholipase A2 family. Group II subfamily. D49 sub-subfamily. Ca(2+) serves as cofactor. In terms of tissue distribution, expressed by the venom gland.

The protein resides in the secreted. The enzyme catalyses a 1,2-diacyl-sn-glycero-3-phosphocholine + H2O = a 1-acyl-sn-glycero-3-phosphocholine + a fatty acid + H(+). Its function is as follows. Snake venom phospholipase A2 (PLA2) that displays edema-inducing activities. PLA-B is three times more active than PLA-A in edema-inducing activities. PLA2 catalyzes the calcium-dependent hydrolysis of the 2-acyl groups in 3-sn-phosphoglycerides. The polypeptide is Basic phospholipase A2 PLA-B (Protobothrops flavoviridis (Habu)).